The primary structure comprises 406 residues: NADH-ubiquinone oxidoreductase 49 kDa subunit (406 aa).

This sequence belongs to the complex I 49 kDa subunit family. Complex I is composed of 45 different subunits. Component of the iron-sulfur (IP) fragment of the enzyme.

The protein localises to the mitochondrion inner membrane. The enzyme catalyses a ubiquinone + NADH + 5 H(+)(in) = a ubiquinol + NAD(+) + 4 H(+)(out). Functionally, core subunit of the mitochondrial membrane respiratory chain NADH dehydrogenase (Complex I) that is believed to belong to the minimal assembly required for catalysis. Complex I functions in the transfer of electrons from NADH to the respiratory chain. The immediate electron acceptor for the enzyme is believed to be ubiquinone. The sequence is that of NADH-ubiquinone oxidoreductase 49 kDa subunit (nad7) from Dictyostelium citrinum (Slime mold).